A 295-amino-acid chain; its full sequence is Indole-3-glycerol phosphate synthase (295 aa).

It belongs to the TrpC family.

It carries out the reaction 1-(2-carboxyphenylamino)-1-deoxy-D-ribulose 5-phosphate + H(+) = (1S,2R)-1-C-(indol-3-yl)glycerol 3-phosphate + CO2 + H2O. The protein operates within amino-acid biosynthesis; L-tryptophan biosynthesis; L-tryptophan from chorismate: step 4/5. The sequence is that of Indole-3-glycerol phosphate synthase from Synechococcus sp. (strain CC9605).